A 525-amino-acid chain; its full sequence is GMP synthase [glutamine-hydrolyzing] (525 aa).

A Glutamine amidotransferase type-1 domain is found at 8–207; the sequence is KILILDFGSQ…ALDICGCAAN (200 aa). The active-site Nucleophile is the C85. Active-site residues include H181 and E183. In terms of domain architecture, GMPS ATP-PPase spans 208–400; that stretch reads WKPSSIIEDA…LGLPYNMLYR (193 aa). Position 235–241 (235–241) interacts with ATP; that stretch reads SGGVDSS.

In terms of assembly, homodimer.

The catalysed reaction is XMP + L-glutamine + ATP + H2O = GMP + L-glutamate + AMP + diphosphate + 2 H(+). Its pathway is purine metabolism; GMP biosynthesis; GMP from XMP (L-Gln route): step 1/1. Catalyzes the synthesis of GMP from XMP. The sequence is that of GMP synthase [glutamine-hydrolyzing] from Shewanella sp. (strain ANA-3).